The following is a 52-amino-acid chain: Mitogenic lectin alpha chain (52 aa).

Belongs to the leguminous lectin family. As to quaternary structure, tetramer of two alpha and two beta chains.

The polypeptide is Mitogenic lectin alpha chain (Vicia sativa (Spring vetch)).